Here is a 142-residue protein sequence, read N- to C-terminus: FAD synthase (142 aa).

ATP-binding positions include 9–10, 14–17, Asp-92, and Tyr-119; these read TF and HPGH.

The protein belongs to the archaeal FAD synthase family. As to quaternary structure, homodimer. A divalent metal cation is required as a cofactor.

The enzyme catalyses FMN + ATP + H(+) = FAD + diphosphate. It participates in cofactor biosynthesis; FAD biosynthesis; FAD from FMN: step 1/1. In terms of biological role, catalyzes the transfer of the AMP portion of ATP to flavin mononucleotide (FMN) to produce flavin adenine dinucleotide (FAD) coenzyme. The sequence is that of FAD synthase from Halorhabdus utahensis (strain DSM 12940 / JCM 11049 / AX-2).